A 379-amino-acid chain; its full sequence is MSLNTPDVIICKAAVVRELGRSVMVEEIKVDPPKATEVRIKMLFASICHTDMLCFDGFPTPLFPRIPGHEGVGMVESVGEDIKTKLKPGDIVMPLFMGECGQCLNCKSKRTNLCHAYPLTLSGLLLDGTSRMSIAKTEETIYHHLSCSTWSEYMVIDINYVLKIDPKMHLPYASFLSCGFTTGFGAPWKETQITKGSIVAVFGLGAVGLGAIKGAQMQGASIIIGVDINENKAAKGKAFGMTHFINPKDHPNQLVSDMVRDITDGLGVDYCFECTGIASLLKEIIEASKIGFGTTILIGAAPDNVPISSLSLINGRTLKGTTFGGVRTRSDLPIILQKCMNEEIELDELMSHEIRLENIHEIFEILKKPDCVKILINFD.

Cys-48 lines the Zn(2+) pocket. Residue 49–53 participates in NAD(+) binding; that stretch reads HTDML. Zn(2+) contacts are provided by His-69, Cys-100, Cys-103, Cys-106, Cys-114, and Cys-178. NAD(+) is bound by residues 203-208, Asp-227, Lys-232, 275-277, 298-300, and 321-323; these read GLGAVG, TGI, IGA, and TTF.

It belongs to the zinc-containing alcohol dehydrogenase family. Class-IV subfamily. In terms of assembly, homodimer. The cofactor is Zn(2+). In terms of tissue distribution, expressed in flowers and disk florets.

It catalyses the reaction (R,R)-chrysanthemol + NAD(+) = (1R,3R)-chrysanthemal + NADH + H(+). It carries out the reaction nerol + NAD(+) = neral + NADH + H(+). The catalysed reaction is (S)-(-)-citronellol + NAD(+) = (S)-(-)-citronellal + NADH + H(+). The enzyme catalyses perillyl alcohol + NAD(+) = perillyl aldehyde + NADH + H(+). It catalyses the reaction (6E)-8-hydroxygeraniol + NAD(+) = (6E)-8-hydroxygeranial + NADH + H(+). It carries out the reaction (2E)-geraniol + NAD(+) = (2E)-geranial + NADH + H(+). The protein operates within isoprenoid biosynthesis. Its function is as follows. Component of the monoterpenoid pyrethrins biosynthesis; pyrethrins are widely used plant-derived pesticide. Mediates the conversion of trans-chrysanthemol into trans-chrysanthemal. This is Alcohol dehydrogenase 2 from Tanacetum cinerariifolium (Dalmatian daisy).